The chain runs to 396 residues: Phosphoglycerate kinase (396 aa).

Residues 21 to 23, Arg-36, 59 to 62, Arg-119, and Arg-156 contribute to the substrate site; these read DFN and HLGK. ATP-binding positions include Lys-206, Gly-294, Glu-325, and 352-355; that span reads GGDS.

It belongs to the phosphoglycerate kinase family. Monomer.

It is found in the cytoplasm. It catalyses the reaction (2R)-3-phosphoglycerate + ATP = (2R)-3-phospho-glyceroyl phosphate + ADP. It participates in carbohydrate degradation; glycolysis; pyruvate from D-glyceraldehyde 3-phosphate: step 2/5. The chain is Phosphoglycerate kinase from Listeria monocytogenes serotype 4b (strain CLIP80459).